The chain runs to 360 residues: Chorismate synthase (360 aa).

The disordered stretch occupies residues 36–60 (LSEDDIQPDLDRRKPGTSKYTTPRR). R48 serves as a coordination point for NADP(+). Residues 125-127 (RSS), 246-247 (NA), G286, 301-305 (KPTSS), and R327 each bind FMN.

The protein belongs to the chorismate synthase family. Homotetramer. It depends on FMNH2 as a cofactor.

The enzyme catalyses 5-O-(1-carboxyvinyl)-3-phosphoshikimate = chorismate + phosphate. Its pathway is metabolic intermediate biosynthesis; chorismate biosynthesis; chorismate from D-erythrose 4-phosphate and phosphoenolpyruvate: step 7/7. Functionally, catalyzes the anti-1,4-elimination of the C-3 phosphate and the C-6 proR hydrogen from 5-enolpyruvylshikimate-3-phosphate (EPSP) to yield chorismate, which is the branch point compound that serves as the starting substrate for the three terminal pathways of aromatic amino acid biosynthesis. This reaction introduces a second double bond into the aromatic ring system. This is Chorismate synthase from Histophilus somni (strain 129Pt) (Haemophilus somnus).